Reading from the N-terminus, the 104-residue chain is Large ribosomal subunit protein uL24 (104 aa).

This sequence belongs to the universal ribosomal protein uL24 family. In terms of assembly, part of the 50S ribosomal subunit.

One of two assembly initiator proteins, it binds directly to the 5'-end of the 23S rRNA, where it nucleates assembly of the 50S subunit. Its function is as follows. One of the proteins that surrounds the polypeptide exit tunnel on the outside of the subunit. This is Large ribosomal subunit protein uL24 from Klebsiella pneumoniae (strain 342).